We begin with the raw amino-acid sequence, 581 residues long: Leucine-rich repeat-containing protein 15 (581 aa).

The signal sequence occupies residues 1–21 (MPLKHYLLLLVGCQAWGAGLA). Residues 22 to 53 (YHGCPSECTCSRASQVECTGARIVAVPTPLPW) form the LRRNT domain. Over 22–538 (YHGCPSECTC…VWGMTQAQSG (517 aa)) the chain is Extracellular. 15 LRR repeats span residues 54-75 (NAMSLQILNTHITELNESPFLN), 78-99 (ALIALRIEKNELSRITPGAFRN), 102-123 (SLRYLSLANNKLQVLPIGLFQG), 126-147 (SLESLLLSSNQLLQIQPAHFSQ), 150-171 (NLKELQLHGNHLEYIPDGAFDH), 174-195 (GLTKLNLGKNSLTHISPRVFQH), 198-219 (NLQVLRLYENRLTDIPMGTFDG), 222-243 (NLQELALQQNQIGLLSPGLFHN), 246-267 (NLQRLYLSNNHISQLPPSVFMQ), 270-291 (QLNRLTLFGNSLKELSPGIFGP), 294-315 (NLRELWLYDNHISSLPDNVFSN), 318-339 (QLQVLILSRNQISFISPGAFNG), 342-363 (ELRELSLHTNALQDLDGNVFRM), 366-387 (NLQNISLQNNRLRQLPGNIFAN), and 390-411 (GLMAIQLQNNQLENLPLGIFDH). The N-linked (GlcNAc...) asparagine glycan is linked to Asn-75. N-linked (GlcNAc...) asparagine glycosylation occurs at Asn-369. The LRRCT domain occupies 423 to 475 (NPWRCDSDILPLRNWLLLNQPRLGTDTVPVCFSPANVRGQSLIIINVNVAVPS). The segment at 489–509 (WYPDTPSYPDTTSVSSTTELT) is disordered. The segment covering 499–509 (TTSVSSTTELT) has biased composition (low complexity). The helical transmembrane segment at 539 to 559 (LAIAAIVIGIVALACSLAACV) threads the bilayer. Residues 560–581 (GCCCCKKRSQAVLMQMKAPNEC) lie on the Cytoplasmic side of the membrane.

In terms of assembly, (Microbial infection) Interacts with human coronavirus SARS-CoV-2 spike protein (via RBD domain); the interaction is direct and sequesters virions at the cell surface. As to quaternary structure, (Microbial infection) Interacts with human coronavirus SARS-CoV-2 spike protein (via RBD domain); the interaction is direct. In terms of tissue distribution, expressed in brain and placenta. Expressed in lung fibroblasts. Expressed in chodrocytes.

The protein resides in the cell membrane. In terms of biological role, (Microbial infection) Modulates the ability of SARS-CoV-2 to infect host cells through interaction with the spike protein. Does not act as a SARS-CoV-2 entry receptor but sequesters virions and antagonizes in trans SARS-CoV-2 infection of ACE2(+) cells when expressed on nearby cells. The sequence is that of Leucine-rich repeat-containing protein 15 (LRRC15) from Homo sapiens (Human).